Here is a 529-residue protein sequence, read N- to C-terminus: Glucose-6-phosphate isomerase (529 aa).

Glu-323 acts as the Proton donor in catalysis. Residues His-352 and Lys-456 contribute to the active site.

Belongs to the GPI family.

The protein localises to the cytoplasm. It carries out the reaction alpha-D-glucose 6-phosphate = beta-D-fructose 6-phosphate. The protein operates within carbohydrate biosynthesis; gluconeogenesis. Its pathway is carbohydrate degradation; glycolysis; D-glyceraldehyde 3-phosphate and glycerone phosphate from D-glucose: step 2/4. In terms of biological role, catalyzes the reversible isomerization of glucose-6-phosphate to fructose-6-phosphate. In Geobacter sulfurreducens (strain ATCC 51573 / DSM 12127 / PCA), this protein is Glucose-6-phosphate isomerase.